A 631-amino-acid chain; its full sequence is Phosphomethylpyrimidine synthase (631 aa).

Substrate is bound by residues N239, M268, Y297, H333, 353 to 355, 394 to 397, and E433; these read SRG and DGLR. H437 is a Zn(2+) binding site. Residue Y460 participates in substrate binding. Residue H501 coordinates Zn(2+). [4Fe-4S] cluster contacts are provided by C581, C584, and C589.

It belongs to the ThiC family. Homodimer. [4Fe-4S] cluster serves as cofactor.

The catalysed reaction is 5-amino-1-(5-phospho-beta-D-ribosyl)imidazole + S-adenosyl-L-methionine = 4-amino-2-methyl-5-(phosphooxymethyl)pyrimidine + CO + 5'-deoxyadenosine + formate + L-methionine + 3 H(+). The protein operates within cofactor biosynthesis; thiamine diphosphate biosynthesis. Its function is as follows. Catalyzes the synthesis of the hydroxymethylpyrimidine phosphate (HMP-P) moiety of thiamine from aminoimidazole ribotide (AIR) in a radical S-adenosyl-L-methionine (SAM)-dependent reaction. This chain is Phosphomethylpyrimidine synthase, found in Ralstonia nicotianae (strain ATCC BAA-1114 / GMI1000) (Ralstonia solanacearum).